A 207-amino-acid chain; its full sequence is Urease accessory protein UreG (207 aa).

14 to 21 (GPVGSGKT) contributes to the GTP binding site.

It belongs to the SIMIBI class G3E GTPase family. UreG subfamily. In terms of assembly, homodimer. UreD, UreF and UreG form a complex that acts as a GTP-hydrolysis-dependent molecular chaperone, activating the urease apoprotein by helping to assemble the nickel containing metallocenter of UreC. The UreE protein probably delivers the nickel.

The protein resides in the cytoplasm. Facilitates the functional incorporation of the urease nickel metallocenter. This process requires GTP hydrolysis, probably effectuated by UreG. The chain is Urease accessory protein UreG from Pseudomonas putida (strain GB-1).